The chain runs to 373 residues: tRNA-specific 2-thiouridylase MnmA (373 aa).

ATP contacts are provided by residues 18-25 (AMSGGVDS) and leucine 44. Residue cysteine 117 is the Nucleophile of the active site. Residues cysteine 117 and cysteine 214 are joined by a disulfide bond. Residue glycine 141 coordinates ATP. The segment at 163-165 (RDQ) is interaction with tRNA. Cysteine 214 (cysteine persulfide intermediate) is an active-site residue.

Belongs to the MnmA/TRMU family.

It is found in the cytoplasm. The catalysed reaction is S-sulfanyl-L-cysteinyl-[protein] + uridine(34) in tRNA + AH2 + ATP = 2-thiouridine(34) in tRNA + L-cysteinyl-[protein] + A + AMP + diphosphate + H(+). Catalyzes the 2-thiolation of uridine at the wobble position (U34) of tRNA, leading to the formation of s(2)U34. The chain is tRNA-specific 2-thiouridylase MnmA from Paramagnetospirillum magneticum (strain ATCC 700264 / AMB-1) (Magnetospirillum magneticum).